The primary structure comprises 130 residues: C-C motif chemokine 28 (130 aa).

An N-terminal signal peptide occupies residues 1–16 (MQQAGLTLMAVAVCVA). 2 disulfides stabilise this stretch: Cys30/Cys58 and Cys31/Cys73. Asn78 carries an N-linked (GlcNAc...) asparagine glycan. The segment at 92-130 (KNGRENVCSGKKQPSRKDRKGHTTRKHRTRGTHRHEASR) is disordered. Residues 104–124 (QPSRKDRKGHTTRKHRTRGTH) are compositionally biased toward basic residues.

It belongs to the intercrine beta (chemokine CC) family. As to expression, mainly expressed in testis, epithelial cells of normal colon, kidney, Peyer patches, lymph nodes. Also found in lower levels in brain, spleen and lung.

Its subcellular location is the secreted. Functionally, chemotactic for resting CD4, CD8 T-cells and eosinophils. Binds to CCR10 and induces calcium mobilization in a dose-dependent manner. The sequence is that of C-C motif chemokine 28 (Ccl28) from Mus musculus (Mouse).